Consider the following 92-residue polypeptide: UPF0250 protein COSY_0496 (92 aa).

Belongs to the UPF0250 family.

This Vesicomyosocius okutanii subsp. Calyptogena okutanii (strain HA) protein is UPF0250 protein COSY_0496.